Reading from the N-terminus, the 76-residue chain is ATP synthase subunit 9, mitochondrial (76 aa).

The next 2 helical transmembrane spans lie at 14–34 and 52–72; these read ISTI…AALI and ILGF…SFLL.

Belongs to the ATPase C chain family. In terms of assembly, F-type ATPases have 2 components, CF(1) - the catalytic core - and CF(0) - the membrane proton channel. CF(1) has five subunits: alpha(3), beta(3), gamma(1), delta(1), epsilon(1). CF(0) has three main subunits: a, b and c.

The protein localises to the mitochondrion membrane. Mitochondrial membrane ATP synthase (F(1)F(0) ATP synthase or Complex V) produces ATP from ADP in the presence of a proton gradient across the membrane which is generated by electron transport complexes of the respiratory chain. F-type ATPases consist of two structural domains, F(1) - containing the extramembraneous catalytic core and F(0) - containing the membrane proton channel, linked together by a central stalk and a peripheral stalk. During catalysis, ATP synthesis in the catalytic domain of F(1) is coupled via a rotary mechanism of the central stalk subunits to proton translocation. Part of the complex F(0) domain. A homomeric c-ring of probably 10 subunits is part of the complex rotary element. The sequence is that of ATP synthase subunit 9, mitochondrial (ATP9) from Vanderwaltozyma polyspora (strain ATCC 22028 / DSM 70294 / BCRC 21397 / CBS 2163 / NBRC 10782 / NRRL Y-8283 / UCD 57-17) (Kluyveromyces polysporus).